Consider the following 339-residue polypeptide: DNA-directed RNA polymerase subunit alpha (339 aa).

The tract at residues 1–235 (MTIQKNWQEL…DQLNVFVNFE (235 aa)) is alpha N-terminal domain (alpha-NTD). The segment at 251–339 (FNPAFLKKVD…ELAKRFEDHY (89 aa)) is alpha C-terminal domain (alpha-CTD).

Belongs to the RNA polymerase alpha chain family. Homodimer. The RNAP catalytic core consists of 2 alpha, 1 beta, 1 beta' and 1 omega subunit. When a sigma factor is associated with the core the holoenzyme is formed, which can initiate transcription.

It carries out the reaction RNA(n) + a ribonucleoside 5'-triphosphate = RNA(n+1) + diphosphate. Functionally, DNA-dependent RNA polymerase catalyzes the transcription of DNA into RNA using the four ribonucleoside triphosphates as substrates. The protein is DNA-directed RNA polymerase subunit alpha of Rhodopseudomonas palustris (strain ATCC BAA-98 / CGA009).